We begin with the raw amino-acid sequence, 174 residues long: Auxin-responsive protein IAA2 (174 aa).

An EAR-like (transcriptional repression) motif is present at residues 16–20; the sequence is LCLGL. The interval 44–67 is disordered; that stretch reads FEETRDEEESTPPTKTQIVGWPPV. The 88-residue stretch at 77–164 folds into the PB1 domain; the sequence is VSYVKVSMDG…SCKRLRIMKG (88 aa).

It belongs to the Aux/IAA family. In terms of assembly, homodimers and heterodimers. Interacts with the auxin-responsive protein IAA1. Interacts with TPL. Preferentially expressed in vegetative organs.

The protein resides in the nucleus. Functionally, aux/IAA proteins are short-lived transcriptional factors that function as repressors of early auxin response genes at low auxin concentrations. Repression is thought to result from the interaction with auxin response factors (ARFs), proteins that bind to the auxin-responsive promoter element (AuxRE). Formation of heterodimers with ARF proteins may alter their ability to modulate early auxin response genes expression. The sequence is that of Auxin-responsive protein IAA2 (IAA2) from Arabidopsis thaliana (Mouse-ear cress).